The primary structure comprises 396 residues: Lipid-A-disaccharide synthase (396 aa).

This sequence belongs to the LpxB family.

It catalyses the reaction a lipid X + a UDP-2-N,3-O-bis[(3R)-3-hydroxyacyl]-alpha-D-glucosamine = a lipid A disaccharide + UDP + H(+). It participates in bacterial outer membrane biogenesis; LPS lipid A biosynthesis. Its function is as follows. Condensation of UDP-2,3-diacylglucosamine and 2,3-diacylglucosamine-1-phosphate to form lipid A disaccharide, a precursor of lipid A, a phosphorylated glycolipid that anchors the lipopolysaccharide to the outer membrane of the cell. The polypeptide is Lipid-A-disaccharide synthase (Hahella chejuensis (strain KCTC 2396)).